The primary structure comprises 628 residues: Chaperone protein HtpG (628 aa).

The a; substrate-binding stretch occupies residues 1-334 (MTTTDTASET…SEDLPLNLSR (334 aa)). The b stretch occupies residues 335 to 550 (EMLQNNPQLA…GFGPDRELEK (216 aa)). Residues 551-628 (MLARANKGAA…LVLRGLVAHG (78 aa)) form a c region.

The protein belongs to the heat shock protein 90 family. As to quaternary structure, homodimer.

It is found in the cytoplasm. Its function is as follows. Molecular chaperone. Has ATPase activity. The sequence is that of Chaperone protein HtpG from Rhodopseudomonas palustris (strain BisB5).